The chain runs to 142 residues: Hemoglobin subunit alpha-1 (142 aa).

The Globin domain maps to 2–142 (VLSPADKTNI…VSTVLTSKYR (141 aa)). O2 is bound at residue His-59. His-88 provides a ligand contact to heme b.

The protein belongs to the globin family. As to quaternary structure, heterotetramer of two alpha chains and two beta chains. As to expression, red blood cells.

Its function is as follows. Involved in oxygen transport from the lung to the various peripheral tissues. This is Hemoglobin subunit alpha-1 from Arctocephalus galapagoensis (Galapagoes fur seal).